A 324-amino-acid polypeptide reads, in one-letter code: Cyclin-dependent kinase C-3 (324 aa).

The Protein kinase domain maps to 27–320 (FRRIRKIGEG…AHDALCAAYF (294 aa)). ATP contacts are provided by residues 33 to 41 (IGEGTYGEV) and Lys56. Thr37 carries the post-translational modification Phosphothreonine. Phosphotyrosine is present on Tyr38. Residue Asp160 is the Proton acceptor of the active site. Position 193 is a phosphothreonine (Thr193).

This sequence belongs to the protein kinase superfamily. CMGC Ser/Thr protein kinase family. CDC2/CDKX subfamily.

The enzyme catalyses L-seryl-[protein] + ATP = O-phospho-L-seryl-[protein] + ADP + H(+). It catalyses the reaction L-threonyl-[protein] + ATP = O-phospho-L-threonyl-[protein] + ADP + H(+). The catalysed reaction is [DNA-directed RNA polymerase] + ATP = phospho-[DNA-directed RNA polymerase] + ADP + H(+). The sequence is that of Cyclin-dependent kinase C-3 (CDKC-1) from Oryza sativa subsp. japonica (Rice).